A 373-amino-acid polypeptide reads, in one-letter code: Chaperone protein DnaJ (373 aa).

Residues 4–68 (NYYQILGVSK…QKRAAYDRLG (65 aa)) form the J domain. Residues 136–214 (GIEKNISFSS…CHGMGRYHKQ (79 aa)) form a CR-type zinc finger. The Zn(2+) site is built by C149, C152, C166, C169, C188, C191, C202, and C205. CXXCXGXG motif repeat units lie at residues 149-156 (CDTCHGSG), 166-173 (CDACSGVG), 188-195 (CHKCQGNG), and 202-209 (CKKCHGMG).

The protein belongs to the DnaJ family. In terms of assembly, homodimer. Requires Zn(2+) as cofactor.

It localises to the cytoplasm. Its function is as follows. Participates actively in the response to hyperosmotic and heat shock by preventing the aggregation of stress-denatured proteins and by disaggregating proteins, also in an autonomous, DnaK-independent fashion. Unfolded proteins bind initially to DnaJ; upon interaction with the DnaJ-bound protein, DnaK hydrolyzes its bound ATP, resulting in the formation of a stable complex. GrpE releases ADP from DnaK; ATP binding to DnaK triggers the release of the substrate protein, thus completing the reaction cycle. Several rounds of ATP-dependent interactions between DnaJ, DnaK and GrpE are required for fully efficient folding. Also involved, together with DnaK and GrpE, in the DNA replication of plasmids through activation of initiation proteins. The protein is Chaperone protein DnaJ of Rickettsia africae (strain ESF-5).